The sequence spans 900 residues: Trehalose-phosphatase (900 aa).

Disordered stretches follow at residues 76–109 (SRLF…EEDP) and 874–900 (VKHS…SYKN). A compositionally biased stretch (basic and acidic residues) spans 82 to 108 (KNRDKSENGEKGENDLHAKEEREKEED).

It in the C-terminal section; belongs to the trehalose phosphatase family. In the N-terminal section; belongs to the glycosyltransferase 20 family. Requires Mg(2+) as cofactor.

The catalysed reaction is alpha,alpha-trehalose 6-phosphate + H2O = alpha,alpha-trehalose + phosphate. The protein operates within carbohydrate biosynthesis. Phosphatase catalytic subunit of the trehalose synthase complex that catalyzes the production of trehalose from glucose-6-phosphate and UDP-alpha-D-glucose in a two step process. This Zygosaccharomyces rouxii protein is Trehalose-phosphatase.